A 672-amino-acid chain; its full sequence is Transcription factor tau 91 kDa subunit (672 aa).

The segment at 1 to 158 (MAVIPAKKRG…SLGQKGRPIR (158 aa)) is required for DNA-binding. A DNA-binding region (a.T hook) is located at residues 6 to 18 (AKKRGRPRKSVVA). Disordered stretches follow at residues 24–45 (SLASPVSENSGSKRPRRNASKK) and 67–156 (VNNV…KGRP). A compositionally biased stretch (acidic residues) spans 71-100 (DDTDDDDFVLNDEGDGEESDNVEIEFENEL). The tract at residues 159–672 (LLKDLSSARD…AGLLTLEYLS (514 aa)) is sufficient for interaction with TFC8. A disulfide bridge links cysteine 375 with cysteine 383.

Heterodimer with TFC8. Component of the TFIIIC complex composed of TFC1, TFC3, TFC4, TFC6, TFC7 and TFC8. The subunits are organized in two globular domains, tauA and tauB, connected by a proteolysis-sensitive and flexible linker. Interacts with TFC1, TFC3, TFC4 and directly with TFC8.

It localises to the nucleus. In terms of biological role, TFIIIC mediates tRNA and 5S RNA gene activation by binding to intragenic promoter elements. Upstream of the transcription start site, TFIIIC assembles the initiation complex TFIIIB-TFIIIC-tDNA, which is sufficient for RNA polymerase III recruitment and function. Part of the tauB domain of TFIIIC that binds boxB DNA promoter sites of tRNA and similar genes. Cooperates with TFC3 in DNA binding. The chain is Transcription factor tau 91 kDa subunit (TFC6) from Saccharomyces cerevisiae (strain ATCC 204508 / S288c) (Baker's yeast).